A 233-amino-acid chain; its full sequence is Hydroxyacylglutathione hydrolase (233 aa).

Residues histidine 52, histidine 54, aspartate 56, histidine 57, histidine 108, aspartate 125, and histidine 163 each coordinate Zn(2+).

The protein belongs to the metallo-beta-lactamase superfamily. Glyoxalase II family. Monomer. The cofactor is Zn(2+).

The enzyme catalyses an S-(2-hydroxyacyl)glutathione + H2O = a 2-hydroxy carboxylate + glutathione + H(+). It participates in secondary metabolite metabolism; methylglyoxal degradation; (R)-lactate from methylglyoxal: step 2/2. Thiolesterase that catalyzes the hydrolysis of S-D-lactoyl-glutathione to form glutathione and D-lactic acid. This Pasteurella multocida (strain Pm70) protein is Hydroxyacylglutathione hydrolase.